The sequence spans 564 residues: Septation ring formation regulator EzrA (564 aa).

At 1-4 (MVLY) the chain is on the extracellular side. A helical membrane pass occupies residues 5–23 (IILAIIVIILIAVGVLFYL). The Cytoplasmic portion of the chain corresponds to 24 to 564 (RSNKRQIIEK…KHIEEEVIKQ (541 aa)). Coiled-coil stretches lie at residues 99-138 (SFNASQSEIDDANELMDSYEQSYQQQLEDVNEIIALYKDN), 190-223 (DGNYVQAHNHIAALNEQMKQLRSYMEEIPELIRE), 271-300 (LISRLELEEANDKLANINDKLDDMYDLIEH), 350-435 (VRQF…RRLL), and 471-550 (VKQL…ESVE).

This sequence belongs to the EzrA family.

It localises to the cell membrane. Functionally, negative regulator of FtsZ ring formation; modulates the frequency and position of FtsZ ring formation. Inhibits FtsZ ring formation at polar sites. Interacts either with FtsZ or with one of its binding partners to promote depolymerization. This Staphylococcus aureus (strain JH1) protein is Septation ring formation regulator EzrA.